The sequence spans 2944 residues: Collagen alpha-1(VII) chain (2944 aa).

An N-terminal signal peptide occupies residues 1–24 (MRLRLLVAALCAAEILMGAPEVWA). The segment at 18 to 1254 (GAPEVWAQPR…TGPCAVHCPK (1237 aa)) is nonhelical region (NC1). In terms of domain architecture, VWFA 1 spans 39 to 212 (DIVFLLDGSS…SILRTLLPLI (174 aa)). 9 consecutive Fibronectin type-III domains span residues 235–330 (GPRD…TAKE), 331–417 (GLEL…TASS), 418–508 (VEQT…LEQL), 511–598 (PVMN…DPEA), 601–688 (VVPG…DPLG), 689–776 (PVRR…APEP), 779–867 (SVSK…PPAT), 870–957 (LLET…EPSH), and 959–1053 (PSTE…SHGP). The N-linked (GlcNAc...) asparagine glycan is linked to asparagine 338. A glycan (N-linked (GlcNAc...) asparagine) is linked at asparagine 787. The VWFA 2 domain maps to 1055–1230 (DVVFLLHATR…PGLDRAVSDL (176 aa)). N-linked (GlcNAc...) asparagine glycosylation occurs at asparagine 1110. Residues 1171-1173 (RGD) carry the Cell attachment site motif. The tract at residues 1255–1475 (GQKGEPGVTG…GLRGAPGMTG (221 aa)) is interrupted collagenous region. Positions 1255–2775 (GQKGEPGVTG…GPRGEKGEAA (1521 aa)) are triple-helical region. 2 disordered regions span residues 1259 to 1934 (EPGV…GSLP) and 1960 to 2773 (SSGS…EKGE). Low complexity predominate over residues 1338 to 1352 (RGPQGPKGEPGEPGQ). The span at 1353–1363 (ITGGGGPGFPG) shows a compositional bias: gly residues. Composition is skewed to basic and acidic residues over residues 1397 to 1406 (KGDKGDRGER) and 1439 to 1448 (PGEKGEKGDC). A compositionally biased stretch (low complexity) spans 1507-1518 (PGAAGHPGVEGP). Composition is skewed to basic and acidic residues over residues 1527 to 1536 (RRGEKGEPGR), 1627 to 1639 (RGRD…KGDE), and 1666 to 1680 (VGEK…EDGR). Over residues 1813 to 1822 (PPGPPGPPGV) the composition is skewed to pro residues. Basic and acidic residues-rich tracts occupy residues 1846–1855 (EDGRKGEKGD), 1862–1871 (EGPDGPKGER), and 1968–1984 (PERR…RGPP). The short motif at 2002-2004 (RGD) is the Cell attachment site element. The segment covering 2040-2049 (GRAGGSGEAG) has biased composition (gly residues). Positions 2050-2068 (RPGERGERGEKGERGDQGR) are enriched in basic and acidic residues. Residues 2063–2065 (RGD) carry the Cell attachment site motif. A compositionally biased stretch (pro residues) spans 2074–2083 (LPGPPGPPGP). The segment covering 2130-2140 (DVGEPGKRGHD) has biased composition (basic and acidic residues). 4-hydroxyproline is present on residues proline 2158, proline 2167, proline 2176, and proline 2179. Low complexity-rich tracts occupy residues 2182 to 2197 (PGLA…SGLK), 2226 to 2241 (SGLV…PGQV), 2279 to 2299 (PKGE…PPGA), and 2306 to 2317 (PGDLAGALLGEP). Over residues 2319–2335 (AKGDRGLPGPRGEKGEA) the composition is skewed to basic and acidic residues. The segment covering 2414–2427 (ERGLAGPPGREGAP) has biased composition (low complexity). Composition is skewed to basic and acidic residues over residues 2462–2477 (RGER…DGHP) and 2525–2544 (AKGD…KGPR). The segment covering 2576–2594 (PKGEPGAAGIPGEPGAPGK) has biased composition (low complexity). The Cell attachment site motif lies at 2601 to 2603 (RGD). The segment covering 2615–2636 (LKGEKGIKGTCGRDGERGDKGE) has biased composition (basic and acidic residues). A 5-hydroxylysine mark is found at lysine 2616 and lysine 2622. Residues 2631 to 2633 (RGD) carry the Cell attachment site motif. 4-hydroxyproline is present on residues proline 2655, proline 2658, and proline 2664. Residues 2695 to 2704 (GPPGVGGFPG) are compositionally biased toward gly residues. The segment at 2776–2944 (LTEDDIRDFV…GVHSQKTGAA (169 aa)) is nonhelical region (NC2). Residues 2879–2931 (CSLPLDEGSCTAYTLRWYHRAVPGGTACHPFVYGGCGGNANRFGTREACERRC) form the BPTI/Kunitz inhibitor domain. Cystine bridges form between cysteine 2879–cysteine 2931, cysteine 2888–cysteine 2914, and cysteine 2906–cysteine 2927.

As to quaternary structure, homotrimer. Interacts with MIA3/TANGO1; facilitating its loading into transport carriers and subsequent secretion. Post-translationally, prolines at the third position of the tripeptide repeating unit (G-X-Y) are hydroxylated in some or all of the chains.

It localises to the secreted. The protein resides in the extracellular space. It is found in the extracellular matrix. The protein localises to the basement membrane. Stratified squamous epithelial basement membrane protein that forms anchoring fibrils which may contribute to epithelial basement membrane organization and adherence by interacting with extracellular matrix (ECM) proteins such as type IV collagen. This chain is Collagen alpha-1(VII) chain, found in Mus musculus (Mouse).